We begin with the raw amino-acid sequence, 443 residues long: Serine--tRNA ligase (443 aa).

L-serine is bound at residue 250-252 (TSE). 281 to 283 (RSE) lines the ATP pocket. Glutamate 304 lines the L-serine pocket. 368–371 (EISS) is an ATP binding site. Serine 403 contacts L-serine.

Belongs to the class-II aminoacyl-tRNA synthetase family. Type-1 seryl-tRNA synthetase subfamily. In terms of assembly, homodimer. The tRNA molecule binds across the dimer.

The protein resides in the cytoplasm. The catalysed reaction is tRNA(Ser) + L-serine + ATP = L-seryl-tRNA(Ser) + AMP + diphosphate + H(+). The enzyme catalyses tRNA(Sec) + L-serine + ATP = L-seryl-tRNA(Sec) + AMP + diphosphate + H(+). It participates in aminoacyl-tRNA biosynthesis; selenocysteinyl-tRNA(Sec) biosynthesis; L-seryl-tRNA(Sec) from L-serine and tRNA(Sec): step 1/1. Its function is as follows. Catalyzes the attachment of serine to tRNA(Ser). Is also able to aminoacylate tRNA(Sec) with serine, to form the misacylated tRNA L-seryl-tRNA(Sec), which will be further converted into selenocysteinyl-tRNA(Sec). The chain is Serine--tRNA ligase from Variovorax paradoxus (strain S110).